The chain runs to 305 residues: MLLHIALILGCWSVFSEGAETDVAERADGRRPIWNMGHMVNGIWQIDQFVDLGVNSIEFDINFDKNGKPVYTYHGVPCDCFRSCLNWEYFGEFLTALRHRTTPGDKLYKEKLILFVFDMKTNSLYDNQAYQAGVNMATDIFKYYWNNGQNGGRAYFILSIPNLNHYDLIKGFRETITKKGHPELMEKVGYDFSANDNIPDVEKAYGKVGVTDHVWQSDGITNCIARGLSRVKEAVKERDSGGVINKVYIWTIDKFSSTRDALDAGVDGIMTNYPYVLNDVLKEGAYKNKFRMATYEDNPWVTFKA.

The first 18 residues, 1-18 (MLLHIALILGCWSVFSEG), serve as a signal peptide directing secretion. Residues 19–26 (AETDVAER) constitute a propeptide that is removed on maturation. His38 is an active-site residue. Mg(2+) contacts are provided by Glu58 and Asp60. His74 acts as the Nucleophile in catalysis. 2 disulfide bridges follow: Cys78–Cys84 and Cys80–Cys223. Asp118 is a Mg(2+) binding site.

It belongs to the arthropod phospholipase D family. Class II subfamily. Class IIa sub-subfamily. The cofactor is Mg(2+). As to expression, expressed by the venom gland.

The protein localises to the secreted. The enzyme catalyses an N-(acyl)-sphingosylphosphocholine = an N-(acyl)-sphingosyl-1,3-cyclic phosphate + choline. It catalyses the reaction an N-(acyl)-sphingosylphosphoethanolamine = an N-(acyl)-sphingosyl-1,3-cyclic phosphate + ethanolamine. It carries out the reaction a 1-acyl-sn-glycero-3-phosphocholine = a 1-acyl-sn-glycero-2,3-cyclic phosphate + choline. The catalysed reaction is a 1-acyl-sn-glycero-3-phosphoethanolamine = a 1-acyl-sn-glycero-2,3-cyclic phosphate + ethanolamine. Its function is as follows. Dermonecrotic toxins cleave the phosphodiester linkage between the phosphate and headgroup of certain phospholipids (sphingolipid and lysolipid substrates), forming an alcohol (often choline) and a cyclic phosphate. This toxin acts on sphingomyelin (SM) wih high activity. It may also act on ceramide phosphoethanolamine (CPE), lysophosphatidylcholine (LPC) and lysophosphatidylethanolamine (LPE), but not on lysophosphatidylserine (LPS), and lysophosphatidylglycerol (LPG). It acts by transphosphatidylation, releasing exclusively cyclic phosphate products as second products. Shows high hemolytic activity. Causes dermonecrosis, induces inflammatory response, platelet aggregation and increases vessel permeability. Shows no lethality when injected at higher dose into mice. May cause complement-dependent hemolysis as well as in a complement-independent manner. The hemolysis provoked in a complement-independent manner may be composed of several steps. The toxin may bind to erythrocyte membranes, may hydrolyze membrane phospholipids (SM and LPC) thus generating metabolism products that may cause hemolysis, probably by provoking an increase of calcium inside cells. The calcium influx may be due to the opening of L-type calcium channels, since L-type calcium channel blockers inhibit calcium influx. The polypeptide is Dermonecrotic toxin LiSicTox-alphaII1 (Loxosceles intermedia (Brown spider)).